A 217-amino-acid polypeptide reads, in one-letter code: UPF0502 protein VIBHAR_05349 (217 aa).

It belongs to the UPF0502 family.

This chain is UPF0502 protein VIBHAR_05349, found in Vibrio campbellii (strain ATCC BAA-1116).